A 386-amino-acid polypeptide reads, in one-letter code: Succinate--CoA ligase [ADP-forming] subunit beta (386 aa).

An ATP-grasp domain is found at 9–244 (KELLRKYGVV…FDEEDADEIE (236 aa)). Residues K46, 53-55 (GRG), E99, A102, and E107 contribute to the ATP site. The Mg(2+) site is built by N199 and D213. Substrate contacts are provided by residues N264 and 321–323 (GIM).

This sequence belongs to the succinate/malate CoA ligase beta subunit family. As to quaternary structure, heterotetramer of two alpha and two beta subunits. It depends on Mg(2+) as a cofactor.

It catalyses the reaction succinate + ATP + CoA = succinyl-CoA + ADP + phosphate. The catalysed reaction is GTP + succinate + CoA = succinyl-CoA + GDP + phosphate. It functions in the pathway carbohydrate metabolism; tricarboxylic acid cycle; succinate from succinyl-CoA (ligase route): step 1/1. In terms of biological role, succinyl-CoA synthetase functions in the citric acid cycle (TCA), coupling the hydrolysis of succinyl-CoA to the synthesis of either ATP or GTP and thus represents the only step of substrate-level phosphorylation in the TCA. The beta subunit provides nucleotide specificity of the enzyme and binds the substrate succinate, while the binding sites for coenzyme A and phosphate are found in the alpha subunit. The sequence is that of Succinate--CoA ligase [ADP-forming] subunit beta from Aromatoleum aromaticum (strain DSM 19018 / LMG 30748 / EbN1) (Azoarcus sp. (strain EbN1)).